Reading from the N-terminus, the 100-residue chain is Co-chaperonin GroES (100 aa).

It belongs to the GroES chaperonin family. Heptamer of 7 subunits arranged in a ring. Interacts with the chaperonin GroEL.

Its subcellular location is the cytoplasm. Functionally, together with the chaperonin GroEL, plays an essential role in assisting protein folding. The GroEL-GroES system forms a nano-cage that allows encapsulation of the non-native substrate proteins and provides a physical environment optimized to promote and accelerate protein folding. GroES binds to the apical surface of the GroEL ring, thereby capping the opening of the GroEL channel. In Nocardia farcinica (strain IFM 10152), this protein is Co-chaperonin GroES.